The sequence spans 498 residues: MRINPTTSGPGVSAFANKNLGHIAQIIGPVLDVAFPPGKMPNIYNALVVKGRDTVDQPINVTCEVQQLLGNNRVRAVAMSATDGLTRGMEVIDTGAPLSVPVGGVTLGRIFNVLGEPVDNLGPVDTRTTSPIHKSAPAFIQLDTRLSIFETGIKVVDLLAPYRRGGKIGLFGGAGVGKTVLIMELINNIAKAHGGVSVFGGVGERTREGNDLYMEMKESGVINDQNLSESKVALVYGQMNEPPGARMRVGLTALTMAEYFRDVNEQDVLLFIDNIFRFVQAGSEVSALLGRMPSAVGYQPTLSTEMGSLQERITSTKEGSITSIQAVYVPADDLTDPAPATTFAHLDATTVLSRGLAAKGIYPAVDPLDSTSTMLQPRIVGEEHYETAQRVKQTLQRYKELQDIIAILGLDELSEEDRLTVARARKIERFLSQPFFVAEVFTGSPGKYVGLAETIRGFKLILSGELDGLPEQAFYLVGNIDEVTAKATNLEMESNLKK.

Residue G172–T179 coordinates ATP.

Belongs to the ATPase alpha/beta chains family. As to quaternary structure, F-type ATPases have 2 components, CF(1) - the catalytic core - and CF(0) - the membrane proton channel. CF(1) has five subunits: alpha(3), beta(3), gamma(1), delta(1), epsilon(1). CF(0) has four main subunits: a(1), b(1), b'(1) and c(9-12).

It localises to the plastid. It is found in the chloroplast thylakoid membrane. It catalyses the reaction ATP + H2O + 4 H(+)(in) = ADP + phosphate + 5 H(+)(out). Functionally, produces ATP from ADP in the presence of a proton gradient across the membrane. The catalytic sites are hosted primarily by the beta subunits. This is ATP synthase subunit beta, chloroplastic from Citrus sinensis (Sweet orange).